A 167-amino-acid chain; its full sequence is ATP synthase subunit delta, mitochondrial (167 aa).

The N-terminal 28 residues, 1–28 (MFRLSNYMLRKSQFPQGLVRAPFGIRGY), are a transit peptide targeting the mitochondrion.

This sequence belongs to the ATPase epsilon chain family. F-type ATPases have 2 components, CF(1) - the catalytic core - and CF(0) - the membrane proton channel. CF(1) has five subunits: alpha(3), beta(3), gamma(1), delta(1), epsilon(1). CF(0) has three main subunits: a, b and c.

The protein localises to the mitochondrion. It is found in the mitochondrion inner membrane. In terms of biological role, mitochondrial membrane ATP synthase (F(1)F(0) ATP synthase or Complex V) produces ATP from ADP in the presence of a proton gradient across the membrane which is generated by electron transport complexes of the respiratory chain. F-type ATPases consist of two structural domains, F(1) - containing the extramembraneous catalytic core, and F(0) - containing the membrane proton channel, linked together by a central stalk and a peripheral stalk. During catalysis, ATP turnover in the catalytic domain of F(1) is coupled via a rotary mechanism of the central stalk subunits to proton translocation. Part of the complex F(1) domain and of the central stalk which is part of the complex rotary element. Rotation of the central stalk against the surrounding alpha(3)beta(3) subunits leads to hydrolysis of ATP in three separate catalytic sites on the beta subunits. The polypeptide is ATP synthase subunit delta, mitochondrial (atp16) (Schizosaccharomyces pombe (strain 972 / ATCC 24843) (Fission yeast)).